We begin with the raw amino-acid sequence, 119 residues long: Protein TusC (119 aa).

It belongs to the DsrF/TusC family. In terms of assembly, heterohexamer, formed by a dimer of trimers. The hexameric TusBCD complex contains 2 copies each of TusB, TusC and TusD. The TusBCD complex interacts with TusE.

Its subcellular location is the cytoplasm. In terms of biological role, part of a sulfur-relay system required for 2-thiolation of 5-methylaminomethyl-2-thiouridine (mnm(5)s(2)U) at tRNA wobble positions. The protein is Protein TusC of Pectobacterium carotovorum subsp. carotovorum (strain PC1).